A 330-amino-acid chain; its full sequence is Ribose-phosphate pyrophosphokinase (330 aa).

An ATP-binding site is contributed by 55-57; the sequence is DGE. The Mg(2+) site is built by His148 and Asp187. The active site involves Lys211. Residues Arg213, Asp237, and 241–245 each bind D-ribose 5-phosphate; that span reads DTGGT.

Belongs to the ribose-phosphate pyrophosphokinase family. Class I subfamily. As to quaternary structure, homohexamer. Requires Mg(2+) as cofactor.

The protein resides in the cytoplasm. It catalyses the reaction D-ribose 5-phosphate + ATP = 5-phospho-alpha-D-ribose 1-diphosphate + AMP + H(+). Its pathway is metabolic intermediate biosynthesis; 5-phospho-alpha-D-ribose 1-diphosphate biosynthesis; 5-phospho-alpha-D-ribose 1-diphosphate from D-ribose 5-phosphate (route I): step 1/1. In terms of biological role, involved in the biosynthesis of the central metabolite phospho-alpha-D-ribosyl-1-pyrophosphate (PRPP) via the transfer of pyrophosphoryl group from ATP to 1-hydroxyl of ribose-5-phosphate (Rib-5-P). The chain is Ribose-phosphate pyrophosphokinase from Nostoc sp. (strain PCC 7120 / SAG 25.82 / UTEX 2576).